Reading from the N-terminus, the 94-residue chain is Ubiquitin-like protein ATG12B (94 aa).

At A2 the chain carries N-acetylalanine. G94 participates in a covalent cross-link: Glycyl lysine isopeptide (Gly-Lys) (interchain with K-128 in ATG5).

It belongs to the ATG12 family. Ubiquitous.

It is found in the cytoplasm. Its function is as follows. Ubiquitin-like protein involved in cytoplasm to vacuole transport (Cvt) and autophagy vesicles formation. Conjugation with ATG5 through a ubiquitin-like conjugating system involving also ATG7 as an E1-like activating enzyme and ATG10 as an E2-like conjugating enzyme, is essential for its function. ATG12/ATG5 conjugate has an essential role in plant nutrient recycling. This chain is Ubiquitin-like protein ATG12B (ATG12B), found in Arabidopsis thaliana (Mouse-ear cress).